Here is a 486-residue protein sequence, read N- to C-terminus: Cysteine--tRNA ligase (486 aa).

C29 contributes to the Zn(2+) binding site. The 'HIGH' region motif lies at 31–41 (ITVYDYCHLGH). Zn(2+)-binding residues include C215, H240, and E244. The 'KMSKS' region motif lies at 272–276 (KMSKS). K275 contributes to the ATP binding site.

The protein belongs to the class-I aminoacyl-tRNA synthetase family. As to quaternary structure, monomer. Requires Zn(2+) as cofactor.

The protein resides in the cytoplasm. The enzyme catalyses tRNA(Cys) + L-cysteine + ATP = L-cysteinyl-tRNA(Cys) + AMP + diphosphate. This Gloeothece citriformis (strain PCC 7424) (Cyanothece sp. (strain PCC 7424)) protein is Cysteine--tRNA ligase.